The primary structure comprises 470 residues: Protein naked cuticle homolog 1 (470 aa).

Disordered stretches follow at residues 1 to 21 (MGKLHSKPAAVCKRRESPEGD) and 90 to 114 (PPEKTDGLGSGDEKKMERVSEPCPG). Residue glycine 2 is the site of N-myristoyl glycine attachment. The segment covering 92-109 (EKTDGLGSGDEKKMERVS) has biased composition (basic and acidic residues). Residues 125–190 (QCDVSMEEDS…LRVKLTVAPD (66 aa)) form an interaction with DVL1, DVL2 and DVL3 region. Positions 131–166 (EEDSRQEWTFTLYDFDNNGKVTREDITSLLHTIYEV) constitute an EF-hand domain. Ca(2+) contacts are provided by aspartate 144, aspartate 146, asparagine 148, lysine 150, and aspartate 155. Polar residues predominate over residues 192-205 (SQSKRSVLVNQADL). Disordered stretches follow at residues 192 to 228 (SQSKRSVLVNQADLQSARPRAETKPTEDLRSWEKKQR), 271 to 314 (QFGP…QGVD), 337 to 357 (GTQDGSKHFVRSPKAQGKSVG), and 446 to 470 (GQPVQRHEHHHHHEHHHHYHHFYQT). A compositionally biased stretch (basic and acidic residues) spans 210–227 (PRAETKPTEDLRSWEKKQ). Residues 271–281 (QFGPGSPSVAQ) show a composition bias toward polar residues. Positions 452–470 (HEHHHHHEHHHHYHHFYQT) are enriched in basic residues.

It belongs to the NKD family. In terms of assembly, interacts with DVL1, DVL2, DVL3 and PPP2R3A. In terms of tissue distribution, expressed in colon, heart, kidney, leukocyte, liver, lung, ovary, pancreas, placenta, prostate, skeletal muscle, small intestine and spleen.

The protein localises to the cell membrane. The protein resides in the cytoplasm. Cell autonomous antagonist of the canonical Wnt signaling pathway. May activate a second Wnt signaling pathway that controls planar cell polarity. The sequence is that of Protein naked cuticle homolog 1 (NKD1) from Homo sapiens (Human).